Here is a 637-residue protein sequence, read N- to C-terminus: Limonene/alpha-pinene synthase, chloroplastic (637 aa).

The transit peptide at 1–56 (MALLSIVSLQVPKSCGLKSLISSSNVQKALCISTAVPTLRMRRRQKALVINMKLTT) directs the protein to the chloroplast. Positions 388, 392, and 540 each coordinate Mg(2+). The short motif at 388–392 (DDMYD) is the DDXXD motif element.

This sequence belongs to the terpene synthase family. Tpsd subfamily. Mg(2+) serves as cofactor. Mn(2+) is required as a cofactor. It depends on K(+) as a cofactor.

It localises to the plastid. Its subcellular location is the chloroplast. It catalyses the reaction (2E)-geranyl diphosphate = (4S)-limonene + diphosphate. The catalysed reaction is (2E)-geranyl diphosphate = (1S,5S)-alpha-pinene + diphosphate. It functions in the pathway terpene metabolism; oleoresin biosynthesis. In terms of biological role, involved in defensive oleoresin formation in conifers in response to insect attack or other injury. Involved in monoterpene (C10) olefins biosynthesis. The chain is Limonene/alpha-pinene synthase, chloroplastic (ag11) from Abies grandis (Grand fir).